The chain runs to 322 residues: Sideroflexin-2 (322 aa).

Met1 carries the post-translational modification N-acetylmethionine. Helical transmembrane passes span 99–119, 147–167, 174–194, 223–243, and 266–286; these read GMLI…VIFW, ALSY…MNMW, LVGR…NIPM, VGIA…MILL, and LQVL…CGLF.

The protein belongs to the sideroflexin family. Expressed in brain, heart, kidney, spleen, thymus, liver, stomach and skin.

Its subcellular location is the mitochondrion inner membrane. The protein resides in the mitochondrion outer membrane. It carries out the reaction L-serine(in) = L-serine(out). Mitochondrial amino-acid transporter that mediates transport of serine into mitochondria. Involved in mitochondrial iron homeostasis by regulating heme biosynthesis. The sequence is that of Sideroflexin-2 from Mus musculus (Mouse).